An 835-amino-acid polypeptide reads, in one-letter code: Involucrin (835 aa).

The span at 1–15 shows a compositional bias: polar residues; the sequence is MSQQHTLPVTLSPAL. Disordered stretches follow at residues 1–133, 150–206, 221–285, 321–342, 381–428, 446–486, 501–548, and 566–809; these read MSQQ…LDQR, EQLL…LEVP, GQLK…QLKH, GQLKHLDQQEGQLELPEQQEGQ, GQLK…VPEE, LDQQ…LEVP, and LDQQ…QPAL. Positions 76–91 are enriched in low complexity; sequence EQQQQEPQEQELQQQH. Basic and acidic residues-rich tracts occupy residues 92–115 and 159–168; these read WEQHEEHQKAENPEQQLKQEKAQR and QEQHLKHLEQ. Residues 169-181 are compositionally biased toward low complexity; the sequence is QEGQLELPEQQEG. Composition is skewed to basic and acidic residues over residues 182-198 and 222-268; these read QLKHLEQQEGQLKHLEQ and QLKH…HLDQ. 3 stretches are compositionally biased toward low complexity: residues 269 to 281, 329 to 341, and 389 to 401; these read QEGQLELPEQQEG. 2 stretches are compositionally biased toward basic and acidic residues: residues 402–421 and 446–464; these read QLKHLEQQEGQLKHLEHQEG and LDQQEGQLKHLDQQEKQLE. Positions 509-521 are enriched in low complexity; the sequence is QEGQLELPEQQEG. 3 stretches are compositionally biased toward basic and acidic residues: residues 522–541, 566–584, and 594–620; these read QLKHLEQQEGQLKHLEHQEG, LDQQEGQLKHLDQQEKQLE, and KHLEQQEGQLEHLEGQEGQLEHLEHQE. Low complexity predominate over residues 655–668; sequence HLVQQEGQLEQQEG. Residues 669-685 are compositionally biased toward basic and acidic residues; that stretch reads QVEHLEEQVGQLKHLEE. Over residues 693 to 710 the composition is skewed to low complexity; that stretch reads LEQQQGQLEVPEQQVGQP. Composition is skewed to basic and acidic residues over residues 711–721, 729–738, and 751–775; these read KHLEQEEKQLE, QLKHLEKQEA, and KHLEQQEKQLEHPEQKDGQLKHLEQ. Positions 776–789 are enriched in polar residues; that stretch reads QEGQLKNLEQQKGQ.

The protein belongs to the involucrin family. As to quaternary structure, directly or indirectly cross-linked to cornifelin (CNFN). In terms of processing, substrate of transglutaminase. Specific glutamines or lysines are cross-linked to keratins, desmoplakin and to inter involucrin molecules. As to expression, keratinocytes of epidermis and other stratified squamous epithelia.

It localises to the cytoplasm. Its function is as follows. Part of the insoluble cornified cell envelope (CE) of stratified squamous epithelia. The protein is Involucrin (IVL) of Pongo pygmaeus (Bornean orangutan).